We begin with the raw amino-acid sequence, 309 residues long: Taste receptor type 2 member 31 (309 aa).

The Extracellular portion of the chain corresponds to 1 to 2 (MT). A helical transmembrane segment spans residues 3–23 (TFLPIIFSSLVVVIFVIGNFA). The Cytoplasmic portion of the chain corresponds to 24 to 55 (NGFIALVNSIEWFKXQKISFADQILTALAVSR). Residues 56-76 (VGLLWVLLLNWYSTVLNPAFY) traverse the membrane as a helical segment. Topologically, residues 77 to 100 (SVEVRTTAYNVWAVTGHFSNWLAT) are extracellular. The chain crosses the membrane as a helical span at residues 101–121 (SLSIFYLLKIANFSNFIFLHL). The Cytoplasmic segment spans residues 122-126 (KRRVK). The chain crosses the membrane as a helical span at residues 127–147 (SVILVMLLGPLLFLACQLFMI). Topologically, residues 148-181 (NMKEIVRTKEYEGNMTWKIKLRSAVYLSDATVTT) are extracellular. Asn161 is a glycosylation site (N-linked (GlcNAc...) asparagine). Residues 182 to 202 (LGNLVPFTLTLLCFLLLICSL) form a helical membrane-spanning segment. The Cytoplasmic portion of the chain corresponds to 203-229 (CKHLKKMQLHGKGSQDPSTKVHIKVLQ). Residues 230–250 (TVISFLLLCAIYFLSIMISVW) traverse the membrane as a helical segment. Topologically, residues 251-259 (SFGSLKNKP) are extracellular. The chain crosses the membrane as a helical span at residues 260-280 (VFMFCKAIRFSYPSIHPFILI). Topologically, residues 281–309 (WGNKKLKQTFLSVLRQVRYWVKGEKPSSP) are cytoplasmic.

It belongs to the G-protein coupled receptor T2R family.

The protein localises to the membrane. Its function is as follows. Receptor that may play a role in the perception of bitterness and is gustducin-linked. May play a role in sensing the chemical composition of the gastrointestinal content. The activity of this receptor may stimulate alpha gustducin, mediate PLC-beta-2 activation and lead to the gating of TRPM5. This Pan paniscus (Pygmy chimpanzee) protein is Taste receptor type 2 member 31 (TAS2R31).